Reading from the N-terminus, the 335-residue chain is Glyceraldehyde-3-phosphate dehydrogenase 1 (335 aa).

NAD(+) is bound by residues arginine 12 to isoleucine 13, aspartate 34, arginine 78, and serine 120. Residues serine 151–threonine 153 and threonine 182 each bind D-glyceraldehyde 3-phosphate. Cysteine 152 serves as the catalytic Nucleophile. Asparagine 183 provides a ligand contact to NAD(+). D-glyceraldehyde 3-phosphate-binding positions include arginine 197, threonine 210–glycine 211, and arginine 233. Asparagine 315 contributes to the NAD(+) binding site.

Belongs to the glyceraldehyde-3-phosphate dehydrogenase family. In terms of assembly, homotetramer. Interacts with BrxC. In terms of processing, in response to oxidative stress, the active site Cys likely reacts with bacillithiol (BSH) to form mixed disulfides to protect the Cys residue against overoxidation. S-bacillithiolation presumably leads to loss of catalytic activity. Debacillithiolation by monothiol bacilliredoxin BrxC restores the activity.

Its subcellular location is the cytoplasm. It carries out the reaction D-glyceraldehyde 3-phosphate + phosphate + NAD(+) = (2R)-3-phospho-glyceroyl phosphate + NADH + H(+). It participates in carbohydrate degradation; glycolysis; pyruvate from D-glyceraldehyde 3-phosphate: step 1/5. Functionally, involved in the glycolysis. Catalyzes the oxidative phosphorylation of glyceraldehyde 3-phosphate (G3P) to 1,3-bisphosphoglycerate (BPG) using the cofactor NAD. The first reaction step involves the formation of a hemiacetal intermediate between G3P and a cysteine residue, and this hemiacetal intermediate is then oxidized to a thioester, with concomitant reduction of NAD to NADH. The reduced NADH is then exchanged with the second NAD, and the thioester is attacked by a nucleophilic inorganic phosphate to produce BPG. The polypeptide is Glyceraldehyde-3-phosphate dehydrogenase 1 (Bacillus subtilis (strain 168)).